A 172-amino-acid chain; its full sequence is MNNYIFVLSSLFLVGCLGLALKPSPIYGGLGLIVSGFVGCLMVLGFGGSFLGLMVFLIYLGGMLVVFGYTTAMATEEYPETWGSNWLILGFLVLGVIMEVFLICVLNYYDEVGVINLDGLGDWLMYEVDDVGVMLEGGIGVAAMYSCATWMMVVAGWSLFAGIFIIIEITRD.

4 helical membrane passes run 1–21 (MNNYIFVLSSLFLVGCLGLAL), 38–58 (VGCLMVLGFGGSFLGLMVFLI), 86–106 (WLILGFLVLGVIMEVFLICVL), and 147–167 (CATWMMVVAGWSLFAGIFIII).

The protein belongs to the complex I subunit 6 family. Core subunit of respiratory chain NADH dehydrogenase (Complex I) which is composed of 45 different subunits.

It is found in the mitochondrion inner membrane. The catalysed reaction is a ubiquinone + NADH + 5 H(+)(in) = a ubiquinol + NAD(+) + 4 H(+)(out). Functionally, core subunit of the mitochondrial membrane respiratory chain NADH dehydrogenase (Complex I) which catalyzes electron transfer from NADH through the respiratory chain, using ubiquinone as an electron acceptor. Essential for the catalytic activity and assembly of complex I. The polypeptide is NADH-ubiquinone oxidoreductase chain 6 (Mtnd6) (Mus musculus (Mouse)).